The chain runs to 670 residues: ATP-dependent DNA helicase Rep (670 aa).

In terms of domain architecture, UvrD-like helicase ATP-binding spans 1 to 277 (MLFNEHQKKA…IIMQHNYRSS (277 aa)). Residues 22 to 29 (AGAGSGKT) and Arg275 contribute to the ATP site. A UvrD-like helicase C-terminal domain is found at 278–562 (GRILKVANAL…QLMTLHASKG (285 aa)).

It belongs to the helicase family. UvrD subfamily. In terms of assembly, homodimer.

It carries out the reaction Couples ATP hydrolysis with the unwinding of duplex DNA by translocating in the 3'-5' direction.. The enzyme catalyses ATP + H2O = ADP + phosphate + H(+). Its function is as follows. Rep helicase is a single-stranded DNA-dependent ATPase involved in DNA replication; it can initiate unwinding at a nick in the DNA. It binds to the single-stranded DNA and acts in a progressive fashion along the DNA in the 3' to 5' direction. This chain is ATP-dependent DNA helicase Rep, found in Buchnera aphidicola subsp. Baizongia pistaciae (strain Bp).